The primary structure comprises 286 residues: MGDSRETHGLNAFVTGYPVKHSRSPLIHGYWLRTLNLAGSYRAVEVTPDDFPAFIAALKDRSSGFVGGNVTIPHKEIAFKLADRPDELSEELGASNTLWLEDGLLHATNTDGRGFTANLDECHPGWDRTDRAVILGAGGASRAVIQAVRDRGVNEIHVVNRTVERAQELSDRFGAQVHAHPMAALGEVMRSAGLFVNTTSLGMENEVAPTIDFSPLAENAVVTDIVYVPLKTPLLAQAEEQGFATVDGLGMLLHQAAPGFETWFGKRPVVDEVLRALIIADMDKHR.

Residues 22 to 24 and Thr-71 contribute to the shikimate site; that span reads SRS. The active-site Proton acceptor is the Lys-75. Glu-87 contacts NADP(+). The shikimate site is built by Asn-96 and Asp-111. NADP(+) contacts are provided by residues 136–140, 160–165, and Ile-225; these read GAGGA and NRTVER. Tyr-227 serves as a coordination point for shikimate. Gly-248 is an NADP(+) binding site.

This sequence belongs to the shikimate dehydrogenase family. As to quaternary structure, homodimer.

The enzyme catalyses shikimate + NADP(+) = 3-dehydroshikimate + NADPH + H(+). It functions in the pathway metabolic intermediate biosynthesis; chorismate biosynthesis; chorismate from D-erythrose 4-phosphate and phosphoenolpyruvate: step 4/7. In terms of biological role, involved in the biosynthesis of the chorismate, which leads to the biosynthesis of aromatic amino acids. Catalyzes the reversible NADPH linked reduction of 3-dehydroshikimate (DHSA) to yield shikimate (SA). The chain is Shikimate dehydrogenase (NADP(+)) from Rhizobium rhizogenes (strain K84 / ATCC BAA-868) (Agrobacterium radiobacter).